A 62-amino-acid polypeptide reads, in one-letter code: Large ribosomal subunit protein bL32 (62 aa).

Basic residues predominate over residues 1-18 (MGVPKKRTSKMRRDRRRA). The disordered stretch occupies residues 1–22 (MGVPKKRTSKMRRDRRRAANNN).

It belongs to the bacterial ribosomal protein bL32 family.

This chain is Large ribosomal subunit protein bL32, found in Myxococcus xanthus (strain DK1622).